Consider the following 487-residue polypeptide: 3-octaprenyl-4-hydroxybenzoate carboxy-lyase (487 aa).

Position 172 (asparagine 172) interacts with Mn(2+). Prenylated FMN is bound by residues 175–177 (IYR), 189–191 (RWL), and 194–195 (RG). Glutamate 238 contributes to the Mn(2+) binding site. Aspartate 287 functions as the Proton donor in the catalytic mechanism.

The protein belongs to the UbiD family. Homohexamer. Prenylated FMN is required as a cofactor. The cofactor is Mn(2+).

It localises to the cell membrane. It carries out the reaction a 4-hydroxy-3-(all-trans-polyprenyl)benzoate + H(+) = a 2-(all-trans-polyprenyl)phenol + CO2. The protein operates within cofactor biosynthesis; ubiquinone biosynthesis. In terms of biological role, catalyzes the decarboxylation of 3-octaprenyl-4-hydroxy benzoate to 2-octaprenylphenol, an intermediate step in ubiquinone biosynthesis. In Actinobacillus pleuropneumoniae serotype 7 (strain AP76), this protein is 3-octaprenyl-4-hydroxybenzoate carboxy-lyase.